The sequence spans 384 residues: Secreted LysM effector Blys7 (384 aa).

An N-terminal signal peptide occupies residues 1 to 18 (MQRHLLLGLAGLPALLSA). Residues 27–71 (FATVAANGETCDSMAATWGLDTATFQSLNPKAKCPEVIGGEQYCV) enclose the LysM 1 domain. The span at 81–106 (EPTTAPATTSTQTTTTTTTEVTSTTV) shows a compositional bias: low complexity. The disordered stretch occupies residues 81–112 (EPTTAPATTSTQTTTTTTTEVTSTTVPGNGIT). Residues 127–173 (KFYFVNKGDNCADITARYNLDLSDFLEWNPKAGNSCSGLWANAYACV) enclose the LysM 2 domain. A disordered region spans residues 183–206 (KPKPTSTSTKPPTATGNGIPTPLP). Positions 186 to 195 (PTSTSTKPPT) are enriched in low complexity. One can recognise a LysM 3 domain in the interval 217 to 263 (KFYLVKPGETCADIASRNGVSLSDFLQWNPHAGNACSGLWANAYACL).

This sequence belongs to the secreted LysM effector family.

Its function is as follows. Might have a role in sequestration of chitin oligosaccharides (breakdown products of fungal cell walls that are released during invasion and act as triggers of host immunity) to dampen host defense. In Beauveria bassiana (strain ARSEF 2860) (White muscardine disease fungus), this protein is Secreted LysM effector Blys7.